Consider the following 207-residue polypeptide: Protein lin-7 homolog B (207 aa).

The short motif at 1–13 is the Kinase interacting site element; the sequence is MAALVEPLGLERD. The L27 domain maps to 10–65; the sequence is LERDVSRAVELLERLQRSGELPPQKLQALQRVLQSRFCSAIREVYEQLYDTLDITG. One can recognise a PDZ domain in the interval 93–175; the sequence is VVELPKTDEG…SVKLVVRYTP (83 aa). Residues 187–207 are disordered; sequence KMRSARRRQQHHSYTSLESRG. Over residues 198–207 the composition is skewed to polar residues; it reads HSYTSLESRG.

Belongs to the lin-7 family. Forms a complex with CASK and CASKIN1. Component of the brain-specific heterotrimeric complex (LIN-10-LIN-2-LIN-7 complex) composed of at least APBA1, CASK, and LIN7, which associates with the motor protein KIF17 to transport vesicles along microtubules. Forms a heterotrimeric complex composed of MMP5, LIN7B and PATJ; the N-terminal L27 domain of PALS1 interacts with the L27 domain of PATJ and the C-terminal L27 domain of PALS1 interacts with the L27 domain of LIN7B. Forms a heterotrimeric complex with DLG1 and CASK via their L27 domains. Interacts with DLG4 and GRIN2B as well as CDH1 and CTNNB1, the channels KCNJ12/Kir2.2, KCNJ4/Kir2.3 and probably KCNJ2/Kir2.1 and SLC6A12/BGT-1 via its PDZ domain. The association of LIN7A with cadherin and beta-catenin is calcium-dependent, occurs at synaptic junctions and requires the actin cytoskeleton. Interacts with EGFR, ERBB2, ERBB3 and ERBB4 with both PDZ and KID domains. Associates with KIF17 via APBA1. Interacts with ASIC3. Interacts with TOPK. Interacts with RTKN. Interacts with APBA1. Interacts with MPP7. Interacts with DLG2. Interacts with DLG3. As to expression, expressed in the kidney; predominantly in the vasa recta.

Its subcellular location is the cell membrane. The protein resides in the basolateral cell membrane. The protein localises to the cell junction. It is found in the postsynaptic density membrane. It localises to the tight junction. Functionally, plays a role in establishing and maintaining the asymmetric distribution of channels and receptors at the plasma membrane of polarized cells. Forms membrane-associated multiprotein complexes that may regulate delivery and recycling of proteins to the correct membrane domains. The tripartite complex composed of LIN7 (LIN7A, LIN7B or LIN7C), CASK and APBA1 associates with the motor protein KIF17 to transport vesicles containing N-methyl-D-aspartate (NMDA) receptor subunit NR2B along microtubules. This complex may have the potential to couple synaptic vesicle exocytosis to cell adhesion in brain. Ensures the proper localization of GRIN2B (subunit 2B of the NMDA receptor) to neuronal postsynaptic density and may function in localizing synaptic vesicles at synapses where it is recruited by beta-catenin and cadherin. Required to localize Kir2 channels, GABA transporter (SLC6A12) and EGFR/ERBB1, ERBB2, ERBB3 and ERBB4 to the basolateral membrane of epithelial cells. May increase the amplitude of ASIC3 acid-evoked currents by stabilizing the channel at the cell surface. The sequence is that of Protein lin-7 homolog B (Lin7b) from Mus musculus (Mouse).